The chain runs to 276 residues: Diaminopimelate epimerase (276 aa).

Residues asparagine 13, glutamine 46, and asparagine 66 each coordinate substrate. Cysteine 75 (proton donor) is an active-site residue. Residues 76–77 (GN), asparagine 159, asparagine 192, and 210–211 (ER) contribute to the substrate site. Cysteine 219 functions as the Proton acceptor in the catalytic mechanism. 220-221 (GT) lines the substrate pocket.

The protein belongs to the diaminopimelate epimerase family. In terms of assembly, homodimer.

It localises to the cytoplasm. It carries out the reaction (2S,6S)-2,6-diaminopimelate = meso-2,6-diaminopimelate. It participates in amino-acid biosynthesis; L-lysine biosynthesis via DAP pathway; DL-2,6-diaminopimelate from LL-2,6-diaminopimelate: step 1/1. Its function is as follows. Catalyzes the stereoinversion of LL-2,6-diaminopimelate (L,L-DAP) to meso-diaminopimelate (meso-DAP), a precursor of L-lysine and an essential component of the bacterial peptidoglycan. The sequence is that of Diaminopimelate epimerase from Aeromonas salmonicida (strain A449).